The chain runs to 293 residues: 4-diphosphocytidyl-2-C-methyl-D-erythritol kinase (293 aa).

Lys-10 is a catalytic residue. Residue 94–104 (PVSAGLAGGSS) coordinates ATP. The active site involves Asp-136.

This sequence belongs to the GHMP kinase family. IspE subfamily.

It catalyses the reaction 4-CDP-2-C-methyl-D-erythritol + ATP = 4-CDP-2-C-methyl-D-erythritol 2-phosphate + ADP + H(+). It functions in the pathway isoprenoid biosynthesis; isopentenyl diphosphate biosynthesis via DXP pathway; isopentenyl diphosphate from 1-deoxy-D-xylulose 5-phosphate: step 3/6. Catalyzes the phosphorylation of the position 2 hydroxy group of 4-diphosphocytidyl-2C-methyl-D-erythritol. This Listeria monocytogenes serotype 4b (strain CLIP80459) protein is 4-diphosphocytidyl-2-C-methyl-D-erythritol kinase.